We begin with the raw amino-acid sequence, 205 residues long: UPF0316 protein Cthe_2213 (205 aa).

3 helical membrane-spanning segments follow: residues 15–37, 44–64, and 70–90; these read LPLL…IIFV, LAPV…SQIM, and FVCY…GIII.

The protein belongs to the UPF0316 family.

It localises to the cell membrane. This chain is UPF0316 protein Cthe_2213, found in Acetivibrio thermocellus (strain ATCC 27405 / DSM 1237 / JCM 9322 / NBRC 103400 / NCIMB 10682 / NRRL B-4536 / VPI 7372) (Clostridium thermocellum).